The following is a 143-amino-acid chain: Envelope protein A28 homolog (143 aa).

Residues 1 to 21 (MNTVQILVVILITTALSFLVF) form a helical; Signal-anchor for type II membrane protein membrane-spanning segment. At 22–143 (QLWYYAENYE…LLRLLMANTS (122 aa)) the chain is on the virion surface side.

This sequence belongs to the poxviridae A28 protein family. Contains two intramolecular disulfide bonds. They are created by the viral disulfide bond formation pathway, a poxvirus-specific pathway that operates on the cytoplasmic side of the MV membranes.

Its subcellular location is the virion membrane. In terms of biological role, envelope protein required for virus entry into host cell and for cell-cell fusion (syncytium formation). The sequence is that of Envelope protein A28 homolog from Amsacta (AmEPV).